We begin with the raw amino-acid sequence, 371 residues long: Queuine tRNA-ribosyltransferase (371 aa).

The active-site Proton acceptor is the D90. Residues 90-94, D144, Q188, and G215 each bind substrate; that span reads DSGGF. Positions 246-252 are RNA binding; it reads GVGTPED. D265 (nucleophile) is an active-site residue. The RNA binding; important for wobble base 34 recognition stretch occupies residues 270–274; it reads TRNAR. The Zn(2+) site is built by C303, C305, C308, and H334.

The protein belongs to the queuine tRNA-ribosyltransferase family. As to quaternary structure, homodimer. Within each dimer, one monomer is responsible for RNA recognition and catalysis, while the other monomer binds to the replacement base PreQ1. Zn(2+) is required as a cofactor.

It carries out the reaction 7-aminomethyl-7-carbaguanine + guanosine(34) in tRNA = 7-aminomethyl-7-carbaguanosine(34) in tRNA + guanine. The protein operates within tRNA modification; tRNA-queuosine biosynthesis. Catalyzes the base-exchange of a guanine (G) residue with the queuine precursor 7-aminomethyl-7-deazaguanine (PreQ1) at position 34 (anticodon wobble position) in tRNAs with GU(N) anticodons (tRNA-Asp, -Asn, -His and -Tyr). Catalysis occurs through a double-displacement mechanism. The nucleophile active site attacks the C1' of nucleotide 34 to detach the guanine base from the RNA, forming a covalent enzyme-RNA intermediate. The proton acceptor active site deprotonates the incoming PreQ1, allowing a nucleophilic attack on the C1' of the ribose to form the product. After dissociation, two additional enzymatic reactions on the tRNA convert PreQ1 to queuine (Q), resulting in the hypermodified nucleoside queuosine (7-(((4,5-cis-dihydroxy-2-cyclopenten-1-yl)amino)methyl)-7-deazaguanosine). The chain is Queuine tRNA-ribosyltransferase from Chromobacterium violaceum (strain ATCC 12472 / DSM 30191 / JCM 1249 / CCUG 213 / NBRC 12614 / NCIMB 9131 / NCTC 9757 / MK).